Here is a 157-residue protein sequence, read N- to C-terminus: METLQSETKTRVLPSWLTAQVATKNVAPMKAPKRMRMAAVPVAAARLPATRTVYCMNEAEIVDVALGILIESRKQEKACEQPALAGADNPEHSPPCSVSPHTSSGSSSEEEDSGKQALAPGLSPSQRPGGSSSACSRSPEEEEEEDVLKYVREIFFS.

Met-1 is modified (N-acetylmethionine). Residues 1 to 21 (METLQSETKTRVLPSWLTAQV) carry the KBM motif. The interval 77 to 147 (KACEQPALAG…SPEEEEEEDV (71 aa)) is disordered. Residues 98 to 107 (VSPHTSSGSS) are compositionally biased toward low complexity. Residues 123–136 (SPSQRPGGSSSACS) are compositionally biased toward polar residues. Positions 147-157 (VLKYVREIFFS) match the XLM motif.

In terms of assembly, interacts (via KBM motif) with XRCC5/Ku80 and XRCC6/Ku70 heterodimer. Interacts (via XLF motif) with TRIM28/KAP1, ATM, MRE11, NBN and RAD50. Interacts with splicing factor SF3B1. Interacts with ERCC6L2; this interaction is DNA independent. Does not interact with XRCC5/Ku80 and XRCC6/Ku70 heterodimer. As to quaternary structure, interacts (via KBM motif) with XRCC5/Ku80 and XRCC6/Ku70 heterodimer.

It localises to the cytoplasm. It is found in the nucleus. The protein localises to the chromosome. In terms of biological role, cell-cycle-specific regulator of classical non-homologous end joining (NHEJ) of DNA double-strand break (DSB) repair, which can act both as an activator or inhibitor of NHEJ, depending on the cell cycle phase. Acts as a regulator of DNA repair pathway choice by specifically inhibiting classical NHEJ during the S and G2 phases, thereby promoting error-free repair by homologous recombination during cell cycle phases when sister chromatids are present. Preferentially protects single-stranded overhangs at break sites by inhibiting classical NHEJ, thereby creating a local environment that favors homologous recombination. Acts via interaction with XRCC5/Ku80 and XRCC6/Ku70. In contrast, acts as an activator of NHEJ during G1 phase of the cell cycle: promotes classical NHEJ in G1 phase cells via multivalent interactions that increase the affinity of DNA damage response proteins for DSB-associated chromatin. Also involved in immunoglobulin V(D)J recombination. May also act as an indirect regulator of proteasome. The polypeptide is Cell cycle regulator of non-homologous end joining (Homo sapiens (Human)).